A 406-amino-acid polypeptide reads, in one-letter code: Type IV pilus assembly protein PilC (406 aa).

A run of 4 helical transmembrane segments spans residues 69–91, 171–191, 211–231, and 377–397; these read IFSR…LAIL, YPVI…TGIV, FLIA…LLAV, and MIIF…LPLF.

This sequence belongs to the GSP F family. In terms of assembly, homotetramer. Interacts with PilB.

It localises to the cell inner membrane. Essential inner membrane component of the type IV pilus (T4P) that plays a role in surface and host cell adhesion, colonization, biofilm maturation, virulence, and twitching, a form of surface-associated motility facilitated by cycles of extension, adhesion, and retraction of T4P fibers. Controls both pilus assembly and disassembly and plays an important role in PilB localization to the complex and ATPase activity. The polypeptide is Type IV pilus assembly protein PilC (Thermus thermophilus (strain ATCC 27634 / DSM 579 / HB8)).